The chain runs to 40 residues: Photosystem II reaction center protein J (40 aa).

A helical membrane pass occupies residues 8 to 28 (IPLWLIGTVAGILIIGLLGVF).

The protein belongs to the PsbJ family. In terms of assembly, PSII is composed of 1 copy each of membrane proteins PsbA, PsbB, PsbC, PsbD, PsbE, PsbF, PsbH, PsbI, PsbJ, PsbK, PsbL, PsbM, PsbT, PsbX, PsbY, PsbZ, Psb30/Ycf12, at least 3 peripheral proteins of the oxygen-evolving complex and a large number of cofactors. It forms dimeric complexes.

Its subcellular location is the plastid. The protein localises to the chloroplast thylakoid membrane. Its function is as follows. One of the components of the core complex of photosystem II (PSII). PSII is a light-driven water:plastoquinone oxidoreductase that uses light energy to abstract electrons from H(2)O, generating O(2) and a proton gradient subsequently used for ATP formation. It consists of a core antenna complex that captures photons, and an electron transfer chain that converts photonic excitation into a charge separation. The sequence is that of Photosystem II reaction center protein J from Nandina domestica (Heavenly bamboo).